Here is a 255-residue protein sequence, read N- to C-terminus: Octanoyltransferase (255 aa).

The interval 1 to 27 (MPPASDAHAAPDAAASTSASPQSCAAP) is disordered. The BPL/LPL catalytic domain maps to 59–240 (PDTGDEIWVV…RLIANLDGAT (182 aa)). Residues 99–106 (RGGQITYH), 171–173 (ALG), and 184–186 (GLS) each bind substrate. Cys-202 functions as the Acyl-thioester intermediate in the catalytic mechanism.

This sequence belongs to the LipB family.

It is found in the cytoplasm. It catalyses the reaction octanoyl-[ACP] + L-lysyl-[protein] = N(6)-octanoyl-L-lysyl-[protein] + holo-[ACP] + H(+). It functions in the pathway protein modification; protein lipoylation via endogenous pathway; protein N(6)-(lipoyl)lysine from octanoyl-[acyl-carrier-protein]: step 1/2. Functionally, catalyzes the transfer of endogenously produced octanoic acid from octanoyl-acyl-carrier-protein onto the lipoyl domains of lipoate-dependent enzymes. Lipoyl-ACP can also act as a substrate although octanoyl-ACP is likely to be the physiological substrate. The protein is Octanoyltransferase of Burkholderia thailandensis (strain ATCC 700388 / DSM 13276 / CCUG 48851 / CIP 106301 / E264).